A 1088-amino-acid chain; its full sequence is Myocardin-related transcription factor B (1088 aa).

Glutamate 22 carries the post-translational modification Phosphoserine. One copy of the RPEL 1 repeat lies at 40 to 65 (EVLQLRLQQRRTREQLVDQGIMPPLK). Serine 66 carries the post-translational modification Phosphoserine. RPEL repeat units follow at residues 84–109 (NFLK…EETF) and 128–153 (DDLN…PVDS). 4 disordered regions span residues 165–310 (EDYP…NEPQ), 349–389 (KPLN…PSSL), 472–508 (AELP…STDD), and 528–553 (LSSS…SNLE). Over residues 197-213 (SAASPSEPKVSESPSPV) the composition is skewed to low complexity. Polar residues predominate over residues 214-226 (TTNTPAQFASVSP). Residues 238–248 (ADQPPPRPAAP) show a composition bias toward pro residues. The segment covering 272-287 (NPNDKHRSKKCKDPKP) has biased composition (basic and acidic residues). Low complexity predominate over residues 355 to 366 (NSNSGNSALNNA). Phosphothreonine is present on residues threonine 367 and threonine 370. The span at 367 to 378 (TPNTPRQNTSTP) shows a compositional bias: polar residues. The SAP domain occupies 389–423 (LDDLKVSELKTELKLRGLPVSGTKPDLIERLKPYQ). A compositionally biased stretch (polar residues) spans 528 to 540 (LSSSPLRMTNNED). A phosphoserine mark is found at serine 541 and serine 543. The segment covering 541 to 550 (SLSPTSSTLS) has biased composition (low complexity). Residues 545–601 (TSSTLSNLELDAAEKDRKLQEKEKQIEELKRKLEQEQKLVEVLKMQLEVEKRGQQQR) are a coiled coil. The tract at residues 563 to 591 (LQEKEKQIEELKRKLEQEQKLVEVLKMQL) is required for interaction with itself and with MRTFA. Disordered stretches follow at residues 595–655 (KRGQ…QPVS) and 829–886 (NAPL…STQA). Lysine 628 is covalently cross-linked (Glycyl lysine isopeptide (Lys-Gly) (interchain with G-Cter in SUMO1)). The span at 829 to 838 (NAPLPSLQNG) shows a compositional bias: polar residues. Positions 867 to 879 (KTKDPPRYEEAIK) are enriched in basic and acidic residues. Serine 921 carries the post-translational modification Phosphoserine.

Interacts with MRTFA and SRF. In terms of processing, O-glycosylated.

Its subcellular location is the nucleus. In terms of biological role, acts as a transcriptional coactivator of serum response factor (SRF). Required for skeletal myogenic differentiation. The sequence is that of Myocardin-related transcription factor B from Homo sapiens (Human).